A 428-amino-acid chain; its full sequence is Putative zinc metalloprotease SACOL1281 (428 aa).

His21 contributes to the Zn(2+) binding site. Glu22 is a catalytic residue. Residue His25 participates in Zn(2+) binding. 4 consecutive transmembrane segments (helical) span residues 172–194 (FLTLFAGPLFNFILALVLFIGLA), 309–331 (GSTYIFTAVVGMLASIFTGGFSF), 352–374 (IISLIGYTALLSVNLGIMNLIPI), and 401–420 (TTIIAIGAIFMVVIMILVTW). The PDZ domain occupies 186–269 (ALVLFIGLAY…TKSVELTPKK (84 aa)).

The protein belongs to the peptidase M50B family. Zn(2+) serves as cofactor.

It localises to the cell membrane. This Staphylococcus aureus (strain COL) protein is Putative zinc metalloprotease SACOL1281.